Reading from the N-terminus, the 203-residue chain is Glycerol-3-phosphate acyltransferase (203 aa).

Transmembrane regions (helical) follow at residues 3 to 23 (ILLA…VVVS), 51 to 71 (KAAI…VWLV), 74 to 94 (FGIG…LGHL), 116 to 136 (AVHP…AFFF), 140 to 160 (SLAA…LFGT), and 164 to 178 (PVAW…LLIW).

This sequence belongs to the PlsY family. Probably interacts with PlsX.

Its subcellular location is the cell inner membrane. It carries out the reaction an acyl phosphate + sn-glycerol 3-phosphate = a 1-acyl-sn-glycero-3-phosphate + phosphate. It functions in the pathway lipid metabolism; phospholipid metabolism. Functionally, catalyzes the transfer of an acyl group from acyl-phosphate (acyl-PO(4)) to glycerol-3-phosphate (G3P) to form lysophosphatidic acid (LPA). This enzyme utilizes acyl-phosphate as fatty acyl donor, but not acyl-CoA or acyl-ACP. This chain is Glycerol-3-phosphate acyltransferase, found in Burkholderia pseudomallei (strain K96243).